The following is a 21-amino-acid chain: DYE-linked aldehyde dehydrogenase, gamma chain (21 aa).

Heterotetramer composed of an alpha, a beta and two gamma chains. The cofactor is [2Fe-2S] cluster.

Active with aldehydes and formate esters as substrates. In Amycolatopsis methanolica, this protein is DYE-linked aldehyde dehydrogenase, gamma chain.